Consider the following 125-residue polypeptide: MPKTQRGIYHNLKESEYVASNTDVTFFFSSELYLNKFLDGYQEYRKKFNKKIERVAVTPWNMDMLADITFYSEVEKRGFHAWLKGDNATWREVHVYALRIMTKPNTLDWSRIQKPRLRERRKSMV.

Residues 77-96 constitute a DNA-binding region (H-T-H motif); that stretch reads RGFHAWLKGDNATWREVHVY.

The protein belongs to the phi29likevirus late genes activator p4 family. In terms of assembly, interacts with host RNA polymerase (via C-terminus). Interacts with DNA; binds to the A2b, A2c and A3 promoters. Interacts (via C-terminus) with the histone-like protein p6.

In terms of biological role, mediates, together with protein p6, the early to late transcriptional switch by stabilizing the binding of host RNA polymerase (RNAP) to the late A3 promoter. Activates transcription from the late A3 promoter and represses the main early promoters A2b and A2c by modifying the topology of the sequences encompassing early promoters A2c and A2b and late promoter A3 in a hairpin. Proteins p6 and p4 bind cooperatively to an approximately 200 bp DNA region located between the late A3 and the early A2c promoters. Binding of p4 molecules induces the reorganization of the binding of protein p6, giving rise to the nucleoprotein complex responsible for the switch from early to late transcription. This is Late genes activator p4 (4) from Bacillus phage phi29 (Bacteriophage phi-29).